The following is a 198-amino-acid chain: uncharacterized protein (198 aa).

Disordered regions lie at residues 15–69 and 172–198; these read RLGQ…KDTR and FSVKESSNLSNNDSDASLDEDTLLWGL. Basic and acidic residues-rich tracts occupy residues 37–49 and 56–69; these read HKSFENLGRDQSR and FNEKQSTEPPKDTR. Positions 176 to 186 are enriched in low complexity; that stretch reads ESSNLSNNDSD. Acidic residues predominate over residues 187 to 198; sequence ASLDEDTLLWGL.

It localises to the nucleus. This is an uncharacterized protein from Schizosaccharomyces pombe (strain 972 / ATCC 24843) (Fission yeast).